The following is a 995-amino-acid chain: Secreted protein CSS1 (995 aa).

The signal sequence occupies residues 1–23 (MFNRLNKFQAALALALYSQSALG). Residues 26 to 253 (YSNSTSISSN…GVSSSGSQSV (228 aa)) form the Methyl-accepting transducer domain. 2 N-linked (GlcNAc...) asparagine glycosylation sites follow: Asn28 and Asn35. A disordered region spans residues 98–276 (SSSSVSDVSS…TSSASTASGS (179 aa)). 2 N-linked (GlcNAc...) asparagine glycosylation sites follow: Asn468 and Asn664.

Belongs to the SRP1/TIP1 family.

The protein localises to the secreted. In terms of biological role, secreted protein that may be involved in cell wall organization and biosynthesis. This Saccharomyces cerevisiae (strain ATCC 204508 / S288c) (Baker's yeast) protein is Secreted protein CSS1.